The chain runs to 177 residues: Large ribosomal subunit protein uL6 (177 aa).

This sequence belongs to the universal ribosomal protein uL6 family. Part of the 50S ribosomal subunit.

This protein binds to the 23S rRNA, and is important in its secondary structure. It is located near the subunit interface in the base of the L7/L12 stalk, and near the tRNA binding site of the peptidyltransferase center. The protein is Large ribosomal subunit protein uL6 of Rickettsia typhi (strain ATCC VR-144 / Wilmington).